A 304-amino-acid chain; its full sequence is 33 kDa chaperonin (304 aa).

Intrachain disulfides connect Cys-245–Cys-247 and Cys-278–Cys-281.

It belongs to the HSP33 family. In terms of processing, under oxidizing conditions two disulfide bonds are formed involving the reactive cysteines. Under reducing conditions zinc is bound to the reactive cysteines and the protein is inactive.

It is found in the cytoplasm. Its function is as follows. Redox regulated molecular chaperone. Protects both thermally unfolding and oxidatively damaged proteins from irreversible aggregation. Plays an important role in the bacterial defense system toward oxidative stress. This is 33 kDa chaperonin from Microcystis aeruginosa (strain NIES-843 / IAM M-2473).